The following is a 318-amino-acid chain: 2-keto-3-deoxygluconate permease (318 aa).

Transmembrane regions (helical) follow at residues 10–30 (LPGGMMLVPLLLGAVCHTLWP), 42–62 (GLISGTVPILAVWFFCMGATI), 82–102 (IAMAWLVAVLCAPLLPIGGVP), 109–129 (LSVLALVAAMDMTNGGLYAAL), 139–159 (AGAVVLMSLESGPLISMLILG), 163–183 (LASFDPLLFVGAVLPLLLGFA), 194–214 (FFAQATTTLVPFFGFALGNTL), 224–244 (ASGVLLGVAVIVITGLPLLLA), 257–277 (VAASSTAGAAVATPALIAGMA), and 289–309 (ALVASAVIVTSLLVPLLTALY).

Belongs to the KdgT transporter family.

Its subcellular location is the cell inner membrane. It carries out the reaction 2-dehydro-3-deoxy-D-gluconate(in) + H(+)(in) = 2-dehydro-3-deoxy-D-gluconate(out) + H(+)(out). Functionally, catalyzes the proton-dependent uptake of 2-keto-3-deoxygluconate (KDG) into the cell. This Xanthomonas euvesicatoria pv. vesicatoria (strain 85-10) (Xanthomonas campestris pv. vesicatoria) protein is 2-keto-3-deoxygluconate permease.